The following is a 155-amino-acid chain: uncharacterized protein (155 aa).

Residues 1–155 (MIVKYIKGDI…IVIVDWEPLL (155 aa)) enclose the Macro domain.

This is an uncharacterized protein from Escherichia coli (Bacteriophage T4).